We begin with the raw amino-acid sequence, 239 residues long: tRNA (guanine-N(1)-)-methyltransferase (239 aa).

S-adenosyl-L-methionine contacts are provided by residues Gly-110 and 130–135; that span reads VGDYVL.

It belongs to the RNA methyltransferase TrmD family. Homodimer.

It localises to the cytoplasm. It catalyses the reaction guanosine(37) in tRNA + S-adenosyl-L-methionine = N(1)-methylguanosine(37) in tRNA + S-adenosyl-L-homocysteine + H(+). Its function is as follows. Specifically methylates guanosine-37 in various tRNAs. This is tRNA (guanine-N(1)-)-methyltransferase from Borrelia hermsii (strain HS1 / DAH).